We begin with the raw amino-acid sequence, 470 residues long: NADH-quinone oxidoreductase subunit D (470 aa).

Over residues 1–18 the composition is skewed to low complexity; sequence MTPSTSTPHTSTAPHTST. The tract at residues 1-37 is disordered; it reads MTPSTSTPHTSTAPHTSTGQSTDGAAQPGDGSSAYEA.

This sequence belongs to the complex I 49 kDa subunit family. NDH-1 is composed of 14 different subunits. Subunits NuoB, C, D, E, F, and G constitute the peripheral sector of the complex.

The protein resides in the cell membrane. The enzyme catalyses a quinone + NADH + 5 H(+)(in) = a quinol + NAD(+) + 4 H(+)(out). NDH-1 shuttles electrons from NADH, via FMN and iron-sulfur (Fe-S) centers, to quinones in the respiratory chain. The immediate electron acceptor for the enzyme in this species is believed to be a menaquinone. Couples the redox reaction to proton translocation (for every two electrons transferred, four hydrogen ions are translocated across the cytoplasmic membrane), and thus conserves the redox energy in a proton gradient. The sequence is that of NADH-quinone oxidoreductase subunit D from Frankia alni (strain DSM 45986 / CECT 9034 / ACN14a).